Consider the following 268-residue polypeptide: MAKVPDLFEDLKNCYSENEDYSSEIDHLSLNQKSFYDASYEPLREDQMDKFMSLDTSETSKTSRLSFKENVVMVAASGKILKKRRLSLNQFITDDDLEAIANNTEEEIIKPRSAHYSFQSNVKYNLLRVIHQECILNDALNQSLIRDLSGPYLTAATLNNLEEAVKFDMVAYVSEEDSQLPVTLRISKTQLFVSAQNEDEPVLLKEMPETPKIIKDETNLLFFWEKHGSMDYFKSVAHPKLFIATKQEKLVHMASGPPSVTDFQILEK.

The propeptide occupies 1–112 (MAKVPDLFED…NTEEEIIKPR (112 aa)). N6-acetyllysine is present on Lys-82. A nuclear localization signal (NLS) region spans residues 82 to 86 (KKRRL). Ser-87 is modified (phosphoserine). N-linked (GlcNAc...) asparagine glycosylation is found at Asn-102 and Asn-141.

The protein belongs to the IL-1 family. Monomer. Interacts with TMED10; the interaction mediates the translocation from the cytoplasm into the ERGIC (endoplasmic reticulum-Golgi intermediate compartment) and thereby secretion. Interacts with IL1R1. Interacts with S100A13; this interaction is the first step in the export of IL1A, followed by direct translocation of this complex across the plasma membrane. Post-translationally, acetylated within its nuclear localization sequence, which impacts subcellular localization. In terms of processing, proteolytic processed by CAPN1 in a calcium-dependent manner. Cleavage from 31 kDa precursor to 18 kDa biologically active molecules. Phosphorylated. Phosphorylation greatly enhances susceptibility to digestion and promotes the conversion of pre-IL1A alpha to the biologically active IL1A.

The protein resides in the nucleus. The protein localises to the cytoplasm. Its subcellular location is the secreted. Cytokine constitutively present intracellularly in nearly all resting non-hematopoietic cells that plays an important role in inflammation and bridges the innate and adaptive immune systems. After binding to its receptor IL1R1 together with its accessory protein IL1RAP, forms the high affinity interleukin-1 receptor complex. Signaling involves the recruitment of adapter molecules such as MYD88, IRAK1 or IRAK4. In turn, mediates the activation of NF-kappa-B and the three MAPK pathways p38, p42/p44 and JNK pathways. Within the cell, acts as an alarmin and cell death results in its liberation in the extracellular space after disruption of the cell membrane to induce inflammation and alert the host to injury or damage. In addition to its role as a danger signal, which occurs when the cytokine is passively released by cell necrosis, directly senses DNA damage and acts as signal for genotoxic stress without loss of cell integrity. This is Interleukin-1 alpha (IL1A) from Bubalus carabanensis (Swamp type water buffalo).